A 245-amino-acid polypeptide reads, in one-letter code: Small ribosomal subunit protein uS2 (245 aa).

The protein belongs to the universal ribosomal protein uS2 family.

This Pseudomonas putida (strain ATCC 47054 / DSM 6125 / CFBP 8728 / NCIMB 11950 / KT2440) protein is Small ribosomal subunit protein uS2.